The following is an 813-amino-acid chain: Tax1-binding protein 1 homolog (813 aa).

Residues S124, S138, and S225 each carry the phosphoserine modification. The stretch at 144-627 (TTKAGLLELK…LENQAERKME (484 aa)) forms a coiled coil. The interval 320-420 (EEIGRLQLCL…ELKLNAMKKD (101 aa)) is oligomerization. Polar residues predominate over residues 489–502 (DASVNTDPATSAST). The tract at residues 489 to 508 (DASVNTDPATSASTVDVKPS) is disordered. A phosphoserine mark is found at S617, S633, and S690. Residues 663 to 738 (YASQETRDGA…DPPSQHLRGH (76 aa)) form a disordered region. UBZ1-type zinc fingers lie at residues 751–777 (HKKCPLCELMFPPNYDQSKFEEHVESH) and 778–804 (WKVCPMCSEQFPPDYDQQVFERHVQTH). Residues C754, C757, H773, H777, C781, C784, H800, and H804 each contribute to the Zn(2+) site.

As to quaternary structure, homooligomer. Interacts with TNFAIP3. Interacts with STARD13. Interacts with MYO6. Interacts with TOM1; the interaction is indirect and is mediated by MYO6, which acts as a bridge between TOM1 and TAX1BP1. Interacts with MAVS; this interaction induces MAVS polyubiquitination. Interacts with TNIP1. Interacts with TRAF6; this interaction mediates deubiquitination of TRAF6 and inhibition of NF-kappa-B activation. Interacts with RIPK1; this interaction negatively regulates RIPK1 ubiquitination. Interacts with NBR1. Interacts with TBK1. Interacts with RB1CC1. Interacts with SQSTM1. Interacts with AZI2.

It localises to the cytoplasm. It is found in the mitochondrion. Its subcellular location is the preautophagosomal structure. The protein localises to the cytoplasmic vesicle. The protein resides in the autophagosome. Its function is as follows. Ubiquitin-binding adapter that participates in inflammatory, antiviral and innate immune processes as well as selective autophagy regulation. Plays a key role in the negative regulation of NF-kappa-B and IRF3 signalings by acting as an adapter for the ubiquitin-editing enzyme A20/TNFAIP3 to bind and inactivate its substrates. Disrupts the interactions between the E3 ubiquitin ligase TRAF3 and TBK1/IKBKE to attenuate 'Lys63'-linked polyubiquitination of TBK1 and thereby IFN-beta production. Also recruits A20/TNFAIP3 to ubiquitinated signaling proteins TRAF6 and RIPK1, leading to their deubiquitination and disruption of IL-1 and TNF-induced NF-kappa-B signaling pathways. Inhibits virus-induced apoptosis by inducing the 'Lys-48'-linked polyubiquitination and degradation of MAVS via recruitment of the E3 ligase ITCH, thereby attenuating MAVS-mediated apoptosis signaling. As a macroautophagy/autophagy receptor, facilitates the xenophagic clearance of pathogenic bacteria such as Salmonella typhimurium and Mycobacterium tuberculosis. Upon NBR1 recruitment to the SQSTM1-ubiquitin condensates, acts as the major recruiter of RB1CC1 to these ubiquitin condensates to promote their autophagic degradation. This Pongo abelii (Sumatran orangutan) protein is Tax1-binding protein 1 homolog (TAX1BP1).